A 127-amino-acid polypeptide reads, in one-letter code: Ribonuclease P protein component (127 aa).

The interval 99 to 127 (ALSASLRQQLRDGIDRSARRQEPAAERQR) is disordered. Basic and acidic residues predominate over residues 107–127 (QLRDGIDRSARRQEPAAERQR).

It belongs to the RnpA family. Consists of a catalytic RNA component (M1 or rnpB) and a protein subunit.

The catalysed reaction is Endonucleolytic cleavage of RNA, removing 5'-extranucleotides from tRNA precursor.. Its function is as follows. RNaseP catalyzes the removal of the 5'-leader sequence from pre-tRNA to produce the mature 5'-terminus. It can also cleave other RNA substrates such as 4.5S RNA. The protein component plays an auxiliary but essential role in vivo by binding to the 5'-leader sequence and broadening the substrate specificity of the ribozyme. The chain is Ribonuclease P protein component from Mycobacteroides abscessus (strain ATCC 19977 / DSM 44196 / CCUG 20993 / CIP 104536 / JCM 13569 / NCTC 13031 / TMC 1543 / L948) (Mycobacterium abscessus).